Here is a 516-residue protein sequence, read N- to C-terminus: MADKLIIFDTTLRDGEQSPGASMTKEEKIRIAKQLERMKVDVIEAGFAASSNGDFDAIHTIAGMIKDSTICSLARANDKDIQRAADALKPADHFRIHTFIATSPLHMEKKLRMSPEQVLEQAKLAVRFARKFTNDVEFSPEDGSRSDMDFLCRVLEAVIAEGATTINIADTVGYGVPELYGNLVKTLRERIPNSDKAVFSVHCHNDLGMAVANSLAGVKIGGARQVECTINGLGERAGNTSLEEIVMAVRTRKDYFGLDLGIDTTQIVPASKLVSQITGFVVQPNKAVVGANAFAHASGIHQDGVLKARDTYEIMRAEDVGWTANKIVLGKLSGRNAFKQRLQELGISLDSESELNLAFQRFKELADRKAEIFDEDIIAIVTEESAEAQEKEHYKFVSLSQHSETGERPHARIVFSVEGKEVVGEANGNGPVDATLNAIETEVGSGSELLLYSVNAITTGTQAQGEVTVRLSKAGRIVNGVGTDPDIVAASAKAYISALNRLYAGADKLNPQRADI.

The 264-residue stretch at 5–268 (LIIFDTTLRD…DLGIDTTQIV (264 aa)) folds into the Pyruvate carboxyltransferase domain. Mn(2+) contacts are provided by Asp14, His202, His204, and Asn239. The segment at 395–516 (KFVSLSQHSE…DKLNPQRADI (122 aa)) is regulatory domain.

Belongs to the alpha-IPM synthase/homocitrate synthase family. LeuA type 1 subfamily. Homodimer. Mn(2+) is required as a cofactor.

The protein resides in the cytoplasm. It catalyses the reaction 3-methyl-2-oxobutanoate + acetyl-CoA + H2O = (2S)-2-isopropylmalate + CoA + H(+). Its pathway is amino-acid biosynthesis; L-leucine biosynthesis; L-leucine from 3-methyl-2-oxobutanoate: step 1/4. Functionally, catalyzes the condensation of the acetyl group of acetyl-CoA with 3-methyl-2-oxobutanoate (2-ketoisovalerate) to form 3-carboxy-3-hydroxy-4-methylpentanoate (2-isopropylmalate). This chain is 2-isopropylmalate synthase, found in Paraburkholderia phymatum (strain DSM 17167 / CIP 108236 / LMG 21445 / STM815) (Burkholderia phymatum).